Reading from the N-terminus, the 75-residue chain is Putative sulfur carrier protein MJ0990 (75 aa).

Residue Cys15 is the Cysteine persulfide intermediate of the active site.

It belongs to the sulfur carrier protein TusA family.

This Methanocaldococcus jannaschii (strain ATCC 43067 / DSM 2661 / JAL-1 / JCM 10045 / NBRC 100440) (Methanococcus jannaschii) protein is Putative sulfur carrier protein MJ0990.